The chain runs to 381 residues: Alcohol dehydrogenase class-3 (381 aa).

Cysteine 49 serves as a coordination point for Zn(2+). Residue histidine 50 coordinates NAD(+). An alcohol contacts are provided by threonine 51 and histidine 71. Zn(2+) contacts are provided by histidine 71, glutamate 72, cysteine 101, cysteine 104, cysteine 107, cysteine 115, and cysteine 179. NAD(+) contacts are provided by residues 204–209, aspartate 228, lysine 233, isoleucine 274, 297–299, 322–324, and arginine 374; these read GLGTVG, VGV, and TAF.

This sequence belongs to the zinc-containing alcohol dehydrogenase family. Class-III subfamily. As to quaternary structure, homodimer. Zn(2+) serves as cofactor. As to expression, expressed at low levels in the leaves.

The protein localises to the cytoplasm. It carries out the reaction a primary alcohol + NAD(+) = an aldehyde + NADH + H(+). The enzyme catalyses a secondary alcohol + NAD(+) = a ketone + NADH + H(+). The catalysed reaction is S-(hydroxymethyl)glutathione + NADP(+) = S-formylglutathione + NADPH + H(+). It catalyses the reaction S-(hydroxymethyl)glutathione + NAD(+) = S-formylglutathione + NADH + H(+). This is Alcohol dehydrogenase class-3 (FDH) from Zea mays (Maize).